The sequence spans 266 residues: Vitamin B12-binding protein (266 aa).

Residues 1–22 form the signal peptide; the sequence is MAKQMFRALVALLLTLPVWLYA. A Fe/B12 periplasmic-binding domain is found at 25–266; it reads RVITLSPANT…QLCNALSQVN (242 aa). Cyanocob(III)alamin contacts are provided by residues Tyr-50 and 242 to 246; that span reads DWFER. A disulfide bridge links Cys-183 with Cys-259.

The protein belongs to the BtuF family. The complex is composed of two ATP-binding proteins (BtuD), two transmembrane proteins (BtuC) and a solute-binding protein (BtuF).

It is found in the periplasm. In terms of biological role, part of the ABC transporter complex BtuCDF involved in vitamin B12 import. Binds vitamin B12 and delivers it to the periplasmic surface of BtuC. This chain is Vitamin B12-binding protein, found in Salmonella paratyphi A (strain ATCC 9150 / SARB42).